Consider the following 235-residue polypeptide: Adenosine 5'-phosphosulfate reductase (235 aa).

Residues C121, C122, C204, and C207 each contribute to the [4Fe-4S] cluster site. The Nucleophile; cysteine thiosulfonate intermediate role is filled by C230.

Belongs to the PAPS reductase family. CysH subfamily. [4Fe-4S] cluster is required as a cofactor.

The protein resides in the cytoplasm. The enzyme catalyses [thioredoxin]-disulfide + sulfite + AMP + 2 H(+) = adenosine 5'-phosphosulfate + [thioredoxin]-dithiol. The protein operates within sulfur metabolism; hydrogen sulfide biosynthesis; sulfite from sulfate. Functionally, catalyzes the formation of sulfite from adenosine 5'-phosphosulfate (APS) using thioredoxin as an electron donor. This is Adenosine 5'-phosphosulfate reductase from Geobacillus kaustophilus (strain HTA426).